Here is a 179-residue protein sequence, read N- to C-terminus: ATP synthase subunit delta (179 aa).

This sequence belongs to the ATPase delta chain family. F-type ATPases have 2 components, F(1) - the catalytic core - and F(0) - the membrane proton channel. F(1) has five subunits: alpha(3), beta(3), gamma(1), delta(1), epsilon(1). F(0) has three main subunits: a(1), b(2) and c(10-14). The alpha and beta chains form an alternating ring which encloses part of the gamma chain. F(1) is attached to F(0) by a central stalk formed by the gamma and epsilon chains, while a peripheral stalk is formed by the delta and b chains.

The protein localises to the cell membrane. In terms of biological role, f(1)F(0) ATP synthase produces ATP from ADP in the presence of a proton or sodium gradient. F-type ATPases consist of two structural domains, F(1) containing the extramembraneous catalytic core and F(0) containing the membrane proton channel, linked together by a central stalk and a peripheral stalk. During catalysis, ATP synthesis in the catalytic domain of F(1) is coupled via a rotary mechanism of the central stalk subunits to proton translocation. Functionally, this protein is part of the stalk that links CF(0) to CF(1). It either transmits conformational changes from CF(0) to CF(1) or is implicated in proton conduction. The sequence is that of ATP synthase subunit delta from Clostridium perfringens (strain ATCC 13124 / DSM 756 / JCM 1290 / NCIMB 6125 / NCTC 8237 / Type A).